The chain runs to 852 residues: Lon protease homolog 2, peroxisomal (852 aa).

An N-acetylserine modification is found at Ser2. Positions 13 to 222 constitute a Lon N-terminal domain; that stretch reads LPLLLTHESV…MTIPLLVRQI (210 aa). Residue 375–382 coordinates ATP; that stretch reads GPPGVGKT. The region spanning 651–837 is the Lon proteolytic domain; it reads LSQPGVAIGL…DEVLNAAFDG (187 aa). Residues Ser743 and Lys786 contribute to the active site. Residues 850-852 carry the Microbody targeting signal motif; the sequence is SKL.

Belongs to the peptidase S16 family. In terms of assembly, interacts with PEX5. Interacts with TYSND1. May interact with enzymes involved in beta-oxidation of fatty acids, including ACOX1/AOX.

It localises to the peroxisome matrix. The enzyme catalyses Hydrolysis of proteins in presence of ATP.. Its function is as follows. ATP-dependent serine protease that mediates the selective degradation of misfolded and unassembled polypeptides in the peroxisomal matrix. Necessary for type 2 peroxisome targeting signal (PTS2)-containing protein processing and facilitates peroxisome matrix protein import. May indirectly regulate peroxisomal fatty acid beta-oxidation through degradation of the self-processed forms of TYSND1. The polypeptide is Lon protease homolog 2, peroxisomal (Lonp2) (Rattus norvegicus (Rat)).